The sequence spans 219 residues: Large ribosomal subunit protein uL3 (219 aa).

Disordered stretches follow at residues 62 to 81 and 136 to 156; these read DSRS…KKAG and QARG…SVGM.

The protein belongs to the universal ribosomal protein uL3 family. As to quaternary structure, part of the 50S ribosomal subunit. Forms a cluster with proteins L14 and L19.

In terms of biological role, one of the primary rRNA binding proteins, it binds directly near the 3'-end of the 23S rRNA, where it nucleates assembly of the 50S subunit. In Staphylococcus saprophyticus subsp. saprophyticus (strain ATCC 15305 / DSM 20229 / NCIMB 8711 / NCTC 7292 / S-41), this protein is Large ribosomal subunit protein uL3.